A 464-amino-acid chain; its full sequence is mRNA capping enzyme LEF-4 (464 aa).

The interval 1–204 (MDYGDFVIEK…NVMCNIIADM (204 aa)) is mRNA triphosphatase. The tract at residues 205–464 (EALTDAQNIS…KHRRDRIVPN (260 aa)) is mRNA guanylyltransferase. Lys-255 acts as the N6-GMP-lysine intermediate in catalysis.

The protein belongs to the baculoviridae LEF-4 family. In terms of assembly, interacts with LEF-8, LEF-9, and p47.

Its subcellular location is the host cytoplasm. It is found in the host nucleus. It carries out the reaction a 5'-end diphospho-ribonucleoside in mRNA + GTP + H(+) = a 5'-end (5'-triphosphoguanosine)-ribonucleoside in mRNA + diphosphate. It catalyses the reaction a 5'-end triphospho-ribonucleoside in mRNA + H2O = a 5'-end diphospho-ribonucleoside in mRNA + phosphate + H(+). In terms of biological role, component of the viral DNA-dependent RNA polymerase that catalyzes two reactions involved in viral RNA cap formation: an RNA 5'-triphosphatase that hydrolyzes the gamma phosphate of triphosphate-terminated RNA and a guanylyltransferase that reacts with GTP to form a covalent protein-guanylate adduct. Therefore plays an essential role in late and very late gene expression. This is mRNA capping enzyme LEF-4 (LEF-4) from Autographa californica nuclear polyhedrosis virus (AcMNPV).